We begin with the raw amino-acid sequence, 446 residues long: N-succinylarginine dihydrolase (446 aa).

Residues 19–28 (AGLSFGNVAS), asparagine 110, and 137–138 (HR) each bind substrate. Glutamate 174 is a catalytic residue. Arginine 213 lines the substrate pocket. Histidine 249 is an active-site residue. Positions 251 and 364 each coordinate substrate. Cysteine 370 (nucleophile) is an active-site residue.

The protein belongs to the succinylarginine dihydrolase family. As to quaternary structure, homodimer.

It catalyses the reaction N(2)-succinyl-L-arginine + 2 H2O + 2 H(+) = N(2)-succinyl-L-ornithine + 2 NH4(+) + CO2. It participates in amino-acid degradation; L-arginine degradation via AST pathway; L-glutamate and succinate from L-arginine: step 2/5. Catalyzes the hydrolysis of N(2)-succinylarginine into N(2)-succinylornithine, ammonia and CO(2). The sequence is that of N-succinylarginine dihydrolase from Burkholderia ambifaria (strain ATCC BAA-244 / DSM 16087 / CCUG 44356 / LMG 19182 / AMMD) (Burkholderia cepacia (strain AMMD)).